A 181-amino-acid chain; its full sequence is UPF0301 protein COXBURSA331_A2219 (181 aa).

The protein belongs to the UPF0301 (AlgH) family.

This chain is UPF0301 protein COXBURSA331_A2219, found in Coxiella burnetii (strain RSA 331 / Henzerling II).